Here is a 381-residue protein sequence, read N- to C-terminus: Alpha-methylacyl-CoA racemase (381 aa).

Substrate-binding positions include Arg-36 and 54–57 (LDLK). Lys-57 carries the post-translational modification N6-acetyllysine. Lys-86 and Lys-100 each carry N6-acetyllysine; alternate. N6-succinyllysine; alternate is present on residues Lys-86 and Lys-100. Lys-117 is subject to N6-acetyllysine. 120-125 (GHDINY) serves as a coordination point for substrate. Catalysis depends on His-121, which acts as the Proton acceptor. Asp-151 functions as the Proton donor in the catalytic mechanism. Lys-267 bears the N6-succinyllysine mark. Residues 316–344 (TDGEQLPSPRPAPLLSRTPAVPSAKRDPS) form a disordered region. Positions 379 to 381 (ANL) match the Microbody targeting signal motif.

Belongs to the CoA-transferase III family. Monomer.

The protein localises to the peroxisome. It localises to the mitochondrion. It catalyses the reaction a (2S)-2-methylacyl-CoA = a (2R)-2-methylacyl-CoA. It carries out the reaction (25R)-3alpha,7alpha,12alpha-trihydroxy-5beta-cholestan-26-oyl-CoA = (25S)-3alpha,7alpha,12alpha-trihydroxy-5beta-cholestan-26-oyl-CoA. The enzyme catalyses (2R,6)-dimethylheptanoyl-CoA = (2S,6)-dimethylheptanoyl-CoA. It participates in lipid metabolism; bile acid biosynthesis. Its pathway is lipid metabolism; fatty acid metabolism. Its function is as follows. Catalyzes the interconversion of (R)- and (S)-stereoisomers of alpha-methyl-branched-chain fatty acyl-CoA esters. Acts only on coenzyme A thioesters, not on free fatty acids, and accepts as substrates a wide range of alpha-methylacyl-CoAs, including pristanoyl-CoA, trihydroxycoprostanoyl-CoA (an intermediate in bile acid synthesis), and arylpropionic acids like the anti-inflammatory drug ibuprofen (2-(4-isobutylphenyl)propionic acid) but neither 3-methyl-branched nor linear-chain acyl-CoAs. In Mus musculus (Mouse), this protein is Alpha-methylacyl-CoA racemase (Amacr).